Reading from the N-terminus, the 513-residue chain is MQLNSTEISELIKKRIAQFDVVSEARNTGTIVSVSDGIIRIHGLSEVMQGEMIALPGNRYAMALNLERDSVGAVVMGPYADLAEGMEVQCTGRILEVPVGRGLLGRVVNTLGEPIDGKGEIENDGFSPVEVIAPGVIDRKSVDQPVQTGYKAVDSMVPIGRGQRELIIGDRQTGKTALAIDAIINQRDSGIKCIYVAIGQKASTIANVVRKLEEHSALQNTIVVVASASESAALQYLAPYSGCAMGEYFRDRGEDALIIYDDLSKQAVAYRQISLLLRRPPGREAFPGDVFYLHSRLLERASRVNEEYVERFTNGEVKGKTGSLTALPIIETQAGDVSAFVPTNVISITDGQIFLESNLFNSGIRPAVNPGISVSRVGGSAQTKVIKKLAGGIRTALAQYRELAAFAQFASDLDDATRKQLSHGQKVTELLKQKQYSPLSVAQQALVLFAVEFGYLEEVDLDRIGSFESALLEYANHNYADFMRELTQSGNYNDEIKESLKGILDSFKANSAW.

G169–T176 provides a ligand contact to ATP.

Belongs to the ATPase alpha/beta chains family. In terms of assembly, F-type ATPases have 2 components, CF(1) - the catalytic core - and CF(0) - the membrane proton channel. CF(1) has five subunits: alpha(3), beta(3), gamma(1), delta(1), epsilon(1). CF(0) has three main subunits: a(1), b(2) and c(9-12). The alpha and beta chains form an alternating ring which encloses part of the gamma chain. CF(1) is attached to CF(0) by a central stalk formed by the gamma and epsilon chains, while a peripheral stalk is formed by the delta and b chains.

Its subcellular location is the cell inner membrane. The catalysed reaction is ATP + H2O + 4 H(+)(in) = ADP + phosphate + 5 H(+)(out). Produces ATP from ADP in the presence of a proton gradient across the membrane. The alpha chain is a regulatory subunit. This is ATP synthase subunit alpha from Pasteurella multocida (strain Pm70).